The primary structure comprises 474 residues: Trehalose-6-phosphate synthase (474 aa).

A D-glucose 6-phosphate-binding site is contributed by Arg-10. 22 to 23 (GG) is a UDP-alpha-D-glucose binding site. Positions 77 and 131 each coordinate D-glucose 6-phosphate. 2 residues coordinate UDP-alpha-D-glucose: Arg-263 and Lys-268. Residue Arg-301 coordinates D-glucose 6-phosphate. UDP-alpha-D-glucose-binding positions include Phe-340 and 366-370 (LVAKE).

It belongs to the glycosyltransferase 20 family. In terms of assembly, homotetramer.

It carries out the reaction D-glucose 6-phosphate + UDP-alpha-D-glucose = alpha,alpha-trehalose 6-phosphate + UDP + H(+). It functions in the pathway glycan biosynthesis; trehalose biosynthesis. In terms of biological role, probably involved in the osmoprotection via the biosynthesis of trehalose. Catalyzes the transfer of glucose from UDP-alpha-D-glucose (UDP-Glc) to D-glucose 6-phosphate (Glc-6-P) to form trehalose-6-phosphate. Acts with retention of the anomeric configuration of the UDP-sugar donor. This is Trehalose-6-phosphate synthase from Cronobacter sakazakii (strain ATCC BAA-894) (Enterobacter sakazakii).